The chain runs to 216 residues: Somatotropin (216 aa).

A signal peptide spans 1-26; that stretch reads MAAGPRNSMLLVFALLSLPWPQEVGA. His-45 is a Zn(2+) binding site. Cys-78 and Cys-189 are joined by a disulfide. Ser-131 is subject to Phosphoserine. Glu-198 contributes to the Zn(2+) binding site. A disulfide bridge links Cys-206 with Cys-214.

The protein belongs to the somatotropin/prolactin family.

Its subcellular location is the secreted. In terms of biological role, plays an important role in growth control. Its major role in stimulating body growth is to stimulate the liver and other tissues to secrete IGF1. It stimulates both the differentiation and proliferation of myoblasts. It also stimulates amino acid uptake and protein synthesis in muscle and other tissues. This Neovison vison (American mink) protein is Somatotropin (GH1).